The following is a 401-amino-acid chain: MIIHPKTRGFICTTTHPVGCEYNVLEQIQSTRARGVRSNGPKKVVVIGASSGYGLATRISAAFGFGADTLGVFFEKPGTEKKPGTAGWYNAAAFDKSAKNAGLYSRSINGDAFSDEMRAKVIEIIKSEMGGHVDLVVYSLASPLRKMPSTGEIKRSVLKPIGVAHTSNAIDTNKDQIIQATVEPATEQEIADTVAVMGGQDWELWINALAQADVLAPQTRTVAFSYIGTEITWPIYWHGALGKAKADLDATSRRLDARLQFLGGGANVAVLKSVVTQASAAIPALPLYIAIVFKVMKEKGLHEGTIEQADRLLRERLYREDGQPAAIDEEHRLRLDDWELREDVQAACKVIWEQVTNENLFQLTDYANYKRDFLKLFGFERADVDYDADVNPEVAFDVIEL.

Residues 48 to 53, 74 to 75, 111 to 112, and 140 to 141 contribute to the NAD(+) site; these read GASSGY, FE, DA, and LA. Tyrosine 226 provides a ligand contact to substrate. Tyrosine 236 serves as the catalytic Proton donor. Residues lysine 245 and 274–276 contribute to the NAD(+) site; that span reads VVT.

It belongs to the TER reductase family. As to quaternary structure, monomer.

It catalyses the reaction a 2,3-saturated acyl-[ACP] + NAD(+) = a (2E)-enoyl-[ACP] + NADH + H(+). It functions in the pathway lipid metabolism; fatty acid biosynthesis. In terms of biological role, involved in the final reduction of the elongation cycle of fatty acid synthesis (FAS II). Catalyzes the reduction of a carbon-carbon double bond in an enoyl moiety that is covalently linked to an acyl carrier protein (ACP). The chain is Enoyl-[acyl-carrier-protein] reductase [NADH] from Xylella fastidiosa (strain Temecula1 / ATCC 700964).